The chain runs to 649 residues: Threonine--tRNA ligase (649 aa).

The TGS domain maps to 1–60 (MHVTLPDGKQLDLQPGATALDAAKAIGPRLAQDALGATANGELTDLMTPLSDGASITLIT). The tract at residues 248–544 (DHRKLGKELE…LIEHYAGDFP (297 aa)) is catalytic. 3 residues coordinate Zn(2+): C341, H392, and H521.

This sequence belongs to the class-II aminoacyl-tRNA synthetase family. Homodimer. Zn(2+) serves as cofactor.

The protein resides in the cytoplasm. It catalyses the reaction tRNA(Thr) + L-threonine + ATP = L-threonyl-tRNA(Thr) + AMP + diphosphate + H(+). In terms of biological role, catalyzes the attachment of threonine to tRNA(Thr) in a two-step reaction: L-threonine is first activated by ATP to form Thr-AMP and then transferred to the acceptor end of tRNA(Thr). Also edits incorrectly charged L-seryl-tRNA(Thr). The chain is Threonine--tRNA ligase from Deinococcus radiodurans (strain ATCC 13939 / DSM 20539 / JCM 16871 / CCUG 27074 / LMG 4051 / NBRC 15346 / NCIMB 9279 / VKM B-1422 / R1).